A 464-amino-acid polypeptide reads, in one-letter code: Glutamate--tRNA ligase (464 aa).

The 'HIGH' region motif lies at 9 to 19 (PSPTGYLHIGG). The 'KMSKS' region signature appears at 242–246 (KISKR). Residue lysine 245 coordinates ATP.

Belongs to the class-I aminoacyl-tRNA synthetase family. Glutamate--tRNA ligase type 1 subfamily. As to quaternary structure, monomer.

Its subcellular location is the cytoplasm. The catalysed reaction is tRNA(Glu) + L-glutamate + ATP = L-glutamyl-tRNA(Glu) + AMP + diphosphate. Its function is as follows. Catalyzes the attachment of glutamate to tRNA(Glu) in a two-step reaction: glutamate is first activated by ATP to form Glu-AMP and then transferred to the acceptor end of tRNA(Glu). The chain is Glutamate--tRNA ligase from Neisseria meningitidis serogroup C (strain 053442).